A 373-amino-acid polypeptide reads, in one-letter code: MSTDCAGNSTCPVNSTEEDPPVGMEGHANLKLLFTVLSAVMVGLVMFSFGCSVESQKLWLHLRRPWGIAVGLLSQFGLMPLTAYLLAIGFGLKPFQAIAVLMMGSCPGGTISNVLTFWVDGDMDLSISMTTCSTVAALGMMPLCLYIYTRSWTLTQNLVIPYQSIGITLVSLVVPVASGVYVNYRWPKQATVILKVGAILGGMLLLVVAVTGMVLAKGWNTDVTLLVISCIFPLVGHVTGFLLAFLTHQSWQRCRTISIETGAQNIQLCIAMLQLSFSAEYLVQLLNFALAYGLFQVLHGLLIVAAYQAYKRRQKSKCRRQHPDCPDVCYEKQPRETSAFLDKGDEAAVTLGPVQPEQHHRAAELTSHIPSCE.

A compositionally biased stretch (polar residues) spans 1–15; the sequence is MSTDCAGNSTCPVNS. Residues 1 to 21 are disordered; the sequence is MSTDCAGNSTCPVNSTEEDPP. Over 1–32 the chain is Extracellular; it reads MSTDCAGNSTCPVNSTEEDPPVGMEGHANLKL. N-linked (GlcNAc...) asparagine glycosylation is found at asparagine 8 and asparagine 14. A helical membrane pass occupies residues 33–53; the sequence is LFTVLSAVMVGLVMFSFGCSV. At 54-67 the chain is on the cytoplasmic side; it reads ESQKLWLHLRRPWG. A helical membrane pass occupies residues 68–88; that stretch reads IAVGLLSQFGLMPLTAYLLAI. Residues 89-97 lie on the Extracellular side of the membrane; it reads GFGLKPFQA. The helical transmembrane segment at 98-118 threads the bilayer; it reads IAVLMMGSCPGGTISNVLTFW. Residues 119-126 are Cytoplasmic-facing; sequence VDGDMDLS. The chain crosses the membrane as a helical span at residues 127-147; the sequence is ISMTTCSTVAALGMMPLCLYI. Over 148-157 the chain is Extracellular; sequence YTRSWTLTQN. The helical transmembrane segment at 158–178 threads the bilayer; the sequence is LVIPYQSIGITLVSLVVPVAS. Topologically, residues 179 to 195 are cytoplasmic; the sequence is GVYVNYRWPKQATVILK. The chain crosses the membrane as a helical span at residues 196–216; it reads VGAILGGMLLLVVAVTGMVLA. At 217–224 the chain is on the extracellular side; that stretch reads KGWNTDVT. The helical transmembrane segment at 225–245 threads the bilayer; that stretch reads LLVISCIFPLVGHVTGFLLAF. The Cytoplasmic segment spans residues 246–265; that stretch reads LTHQSWQRCRTISIETGAQN. A helical membrane pass occupies residues 266 to 283; that stretch reads IQLCIAMLQLSFSAEYLV. Position 284 (glutamine 284) is a topological domain, extracellular. A helical transmembrane segment spans residues 285–305; it reads LLNFALAYGLFQVLHGLLIVA. At 306–373 the chain is on the cytoplasmic side; the sequence is AYQAYKRRQK…ELTSHIPSCE (68 aa).

Belongs to the bile acid:sodium symporter (BASS) (TC 2.A.28) family. Post-translationally, glycosylated. Highest expression in lung and testis, moderate expression in heart, bladder and skin, and low expression in blood, liver, stomach, small intestine, spleen, kidney, adrenal gland, seminal vesicle, preputial gland, coagulating gland, lacrimal gland/eye, and brain.

Its subcellular location is the membrane. It carries out the reaction estrone 3-sulfate(out) + 2 Na(+)(out) = estrone 3-sulfate(in) + 2 Na(+)(in). The enzyme catalyses 17beta-estradiol 3-sulfate(out) + 2 Na(+)(out) = 17beta-estradiol 3-sulfate(in) + 2 Na(+)(in). It catalyses the reaction dehydroepiandrosterone 3-sulfate(out) + 2 Na(+)(out) = dehydroepiandrosterone 3-sulfate(in) + 2 Na(+)(in). The catalysed reaction is androst-5-ene-diol 3-sulfate(out) + 2 Na(+)(out) = androst-5-ene-diol 3-sulfate(in) + 2 Na(+)(in). It carries out the reaction pregnenolone sulfate(out) + 2 Na(+)(out) = pregnenolone sulfate(in) + 2 Na(+)(in). The enzyme catalyses taurolithocholate 3-sulfate(out) + 2 Na(+)(out) = taurolithocholate 3-sulfate(in) + 2 Na(+)(in). It catalyses the reaction androsterone 3alpha-sulfate(out) + 2 Na(+)(out) = androsterone 3alpha-sulfate(in) + 2 Na(+)(in). The catalysed reaction is 5alpha-dihydrotestosterone sulfate(out) + 2 Na(+)(out) = 5alpha-dihydrotestosterone sulfate(in) + 2 Na(+)(in). It carries out the reaction 17beta-estradiol 17-sulfate(out) + 2 Na(+)(out) = 17beta-estradiol 17-sulfate(in) + 2 Na(+)(in). The enzyme catalyses 17alpha-hydroxypregnenolone 3-sulfate(out) + 2 Na(+)(out) = 17alpha-hydroxypregnenolone 3-sulfate(in) + 2 Na(+)(in). It catalyses the reaction epiandrosterone 3-sulfate(out) + 2 Na(+)(out) = epiandrosterone 3-sulfate(in) + 2 Na(+)(in). The catalysed reaction is epitestosterone 17-sulfate(out) + 2 Na(+)(out) = epitestosterone 17-sulfate(in) + 2 Na(+)(in). It carries out the reaction testosterone 17-sulfate(out) + 2 Na(+)(out) = testosterone 17-sulfate(in) + 2 Na(+)(in). The enzyme catalyses 16alpha-hydroxydehydroepiandrosterone 3-sulfate(out) + 2 Na(+)(out) = 16alpha-hydroxydehydroepiandrosterone 3-sulfate(in) + 2 Na(+)(in). Functionally, transports sulfoconjugated steroid hormones from the extracellular compartment into the cytosol in a sodium-dependent manner without hydrolysis. Steroid sulfate hormones are commonly considered to be biologically inactive metabolites, that may be activated by steroid sulfatases into free steroids. May play an important role by delivering sulfoconjugated steroids to specific target cells in reproductive organs. May play a role transporting the estriol precursor 16alpha-hydroxydehydroepiandrosterone 3-sulfate (16a-OH-DHEAS) at the fetal blood vessel endothelium. Can also transport other sulfoconjugated molecules such as taurolithocholic acid-3-sulfate and sulfoconjugated pyrenes. This is Sodium-dependent organic anion transporter (Slc10a6) from Mus musculus (Mouse).